The primary structure comprises 878 residues: Aconitate hydratase A (878 aa).

Cys426, Cys492, and Cys495 together coordinate [4Fe-4S] cluster.

Belongs to the aconitase/IPM isomerase family. Monomer. [4Fe-4S] cluster serves as cofactor.

It catalyses the reaction citrate = D-threo-isocitrate. The enzyme catalyses (2S,3R)-3-hydroxybutane-1,2,3-tricarboxylate = 2-methyl-cis-aconitate + H2O. The protein operates within carbohydrate metabolism; tricarboxylic acid cycle; isocitrate from oxaloacetate: step 2/2. It participates in organic acid metabolism; propanoate degradation. Its function is as follows. Involved in the catabolism of short chain fatty acids (SCFA) via the tricarboxylic acid (TCA)(acetyl degradation route) and probably the 2-methylcitrate cycle I (propionate degradation route). Catalyzes the reversible isomerization of citrate to isocitrate via cis-aconitate. Could catalyze the hydration of 2-methyl-cis-aconitate to yield (2R,3S)-2-methylisocitrate. The apo form of AcnA functions as a RNA-binding regulatory protein. This chain is Aconitate hydratase A (acnA), found in Rickettsia felis (strain ATCC VR-1525 / URRWXCal2) (Rickettsia azadi).